The following is a 932-amino-acid chain: MGLTPMMRQYLEVKESCKDCILFFRLGDFYEMFFEDAKVASKELELVLTGRDCGLEERAPMCGIPYHAANTYVGRLVSAGYKIAICEQLEDPSASKGIVKRGIIKIITPGTYTDSSFLEENKNNYIMSFYLDDNMCAMSFADISTGEFNSTHSNFKEAVVLDEISKFAPREIVLEENIKESFIHTIKERFPNISISKIKEENFDYNIDNNLKEQFNNFNENEYETIVKKSANGLLYYIFHTQKNILSNINKIDYYSIVDYLTIDVNSRRNLEITENLREKTKKGSLLWVLDKTNTAMGGRQLRRWIEQPLINKNPIENRLNAVEELLNNISLQEDLKEDLKSIYDIERIVGKVASKSVNAKELISLKCSIGKVPYIKKYLSGFKSDLFLNMEQCIDTLEDIHKLLDKALLDNPSLSVKEGNIIKEGFNEEVDSLREAKSNGKKWIASLEQKEKEETGIKSLKVSYNKVFGYFIEITKANLNLVPEGRYIRKQTLSNAERYITPELKEMEEKILGAEEKLIDIEYKLFTEIRDFIEENIDRMQKTARIISDIDCLCSLATVALENNYIKPNINAKDEILIEEGRHPVVEKVIPKGEFISNDSLIDTKENQLILITGPNMAGKSTYMRQVALITIMAQIGSFVPAKKANISICDKIFTRIGASDDLAAGKSTFMVEMWEVSNILKNATSKSLVLLDEVGRGTSTYDGLSIAWSVIEYICNNKNLRCKTLFATHYHELTKLEDNIEGVKNYSVSVSELENEIVFLRKIIRGGADQSYGIEVAKLAGLPSPVINRAKEILQHIEGDKEENSLNIAPSKEYKSKDYIEVSKDTLNTKNNLGSEIKHDTLSETNTATIIEDESTKEHLSSNKKQINCRTNDEKSIKKEVAVDSFQINFEYIKIDKIIEEIKNIDILNMTPMEGFNKLYDIINKTKDID.

615–622 contributes to the ATP binding site; that stretch reads GPNMAGKS.

It belongs to the DNA mismatch repair MutS family.

In terms of biological role, this protein is involved in the repair of mismatches in DNA. It is possible that it carries out the mismatch recognition step. This protein has a weak ATPase activity. In Clostridium botulinum (strain Langeland / NCTC 10281 / Type F), this protein is DNA mismatch repair protein MutS.